The following is a 522-amino-acid chain: Protein nucleotidyltransferase YdiU (522 aa).

Positions 109, 111, 112, 132, 144, 145, 195, and 202 each coordinate ATP. Asp-271 acts as the Proton acceptor in catalysis. Positions 272 and 281 each coordinate Mg(2+). Asp-281 is a binding site for ATP.

Belongs to the SELO family. Mg(2+) serves as cofactor. Mn(2+) is required as a cofactor.

It catalyses the reaction L-seryl-[protein] + ATP = 3-O-(5'-adenylyl)-L-seryl-[protein] + diphosphate. It carries out the reaction L-threonyl-[protein] + ATP = 3-O-(5'-adenylyl)-L-threonyl-[protein] + diphosphate. The catalysed reaction is L-tyrosyl-[protein] + ATP = O-(5'-adenylyl)-L-tyrosyl-[protein] + diphosphate. The enzyme catalyses L-histidyl-[protein] + UTP = N(tele)-(5'-uridylyl)-L-histidyl-[protein] + diphosphate. It catalyses the reaction L-seryl-[protein] + UTP = O-(5'-uridylyl)-L-seryl-[protein] + diphosphate. It carries out the reaction L-tyrosyl-[protein] + UTP = O-(5'-uridylyl)-L-tyrosyl-[protein] + diphosphate. In terms of biological role, nucleotidyltransferase involved in the post-translational modification of proteins. It can catalyze the addition of adenosine monophosphate (AMP) or uridine monophosphate (UMP) to a protein, resulting in modifications known as AMPylation and UMPylation. This is Protein nucleotidyltransferase YdiU from Burkholderia lata (strain ATCC 17760 / DSM 23089 / LMG 22485 / NCIMB 9086 / R18194 / 383).